Here is a 463-residue protein sequence, read N- to C-terminus: Glutathione amide reductase (463 aa).

Ni(2+) is bound by residues threonine 2, glutamine 3, and histidine 4. Residues 14–15 (SG), glutamate 34, and threonine 41 each bind FAD. A disulfide bridge links cysteine 42 with cysteine 47. FAD-binding positions include lysine 50 and 113–114 (HA). NAD(+) is bound at residue lysine 50. Residues 174–180 (AGYIGIE), 197–198 (LE), valine 230, and glycine 261 each bind NAD(+). FAD is bound by residues aspartate 302 and 308–310 (QLT). 2 residues coordinate NAD(+): glutamine 308 and valine 341. Histidine 437 provides a ligand contact to FAD. Histidine 437 (proton acceptor) is an active-site residue.

Belongs to the class-I pyridine nucleotide-disulfide oxidoreductase family. Homodimer. It depends on FAD as a cofactor.

It carries out the reaction 2 glutathione amide + NAD(+) = glutathione amide disulfide + NADH + H(+). In terms of biological role, catalyzes the reduction of glutathione amide disulfide (GASSAG) to restore glutathione amide (GASH) in the presence of NADH. May play a role in GASH metabolism under anaerobic conditions as a sulfide carrier necessary for cytoplasmic sulfide oxidation. The protein is Glutathione amide reductase of Marichromatium gracile (Chromatium gracile).